The sequence spans 776 residues: Zinc finger CCCH-type antiviral protein 1 (776 aa).

The residue at position 2 (A2) is an N-acetylalanine. The N-terminal domain stretch occupies residues 2–254 (ADPGVCCFIT…DRSKSRDRFL (253 aa)). The Nuclear localization signal signature appears at 69–76 (RARVCRRK). 4 C3H1-type zinc fingers span residues 73-86 (CRRK…DSLH), 88-110 (CKLN…KYSH), 150-172 (CKSY…ERLH), and 169-193 (ERLH…SHNL). The disordered stretch occupies residues 221–249 (NKHARRNPPGTRAAHPHRRGGAHRDRSKS). The binding to EXOSC5 stretch occupies residues 224–254 (ARRNPPGTRAAHPHRRGGAHRDRSKSRDRFL). Residues S257, S262, S266, and S270 each carry the phosphoserine; by GSK3-beta modification. Phosphoserine is present on S274. T278 is modified (phosphothreonine). A Phosphoserine modification is found at S283. A Nuclear export signal motif is present at residues 284-291 (LEDVSVDV). Positions 308–355 (PVSSKAAGVQGPSQMRASQEFSEDGNLDDIFSRNRSDSSSSRASAAKV) are disordered. Positions 318 to 327 (GPSQMRASQE) are enriched in polar residues. Phosphoserine occurs at positions 325, 351, and 398. Residues 344-353 (DSSSSRASAA) are compositionally biased toward low complexity. A Nuclear localization signal motif is present at residues 405–406 (KK). The segment at 457–483 (WASASTHNAPNGSSQIMDETPNVSKSS) is disordered. Positions 459 to 483 (SASTHNAPNGSSQIMDETPNVSKSS) are enriched in polar residues. Residue Y501 is modified to Phosphotyrosine. Residues 512 to 562 (LAVPGEATTPVQSNRLPQSPLSSSSHRAAASGSPGKNSTHTSVSPAIESSR) are disordered. A compositionally biased stretch (low complexity) spans 523-546 (QSNRLPQSPLSSSSHRAAASGSPG). S544 and S667 each carry phosphoserine. One can recognise a WWE domain in the interval 671–758 (YEEKPLSAVF…ASKTQRHVVR (88 aa)).

The protein belongs to the ARTD/PARP family. As to quaternary structure, homodimer or homooligomer. Homooligomerization is essential for its antiviral activity. Interacts with EXOSC5. Interacts with EXOSC3, EXOSC7, DCP2 and DCP1A. Interacts with PARN in an RNA-independent manner. Interacts with XRN1 in an RNA-dependent manner. Interacts (via N-terminal domain) with DHX30 (via N-terminus) in an RNA-independent manner. Interacts (via N-terminal domain) with DDX17 in an RNA-independent manner. Phosphorylation at Ser-274 is essential for sequential phosphorylation of Ser-270, Ser-266, Ser-262 and Ser-257 by GSK3-beta. Phosphorylation by GSK3-beta enhances its antiviral activity. As to expression, expressed in the kidney and liver.

The protein resides in the cytoplasm. It is found in the nucleus. Antiviral protein which inhibits the replication of viruses by recruiting the cellular RNA degradation machineries to degrade the viral mRNAs. Binds to a ZAP-responsive element (ZRE) present in the target viral mRNA, recruits cellular poly(A)-specific ribonuclease PARN to remove the poly(A) tail, and the 3'-5' exoribonuclease complex exosome to degrade the RNA body from the 3'-end. It also recruits the decapping complex DCP1-DCP2 through RNA helicase p72 (DDX17) to remove the cap structure of the viral mRNA to initiate its degradation from the 5'-end. Its target viruses belong to families which include retroviridae: human immunodeficiency virus type 1 (HIV-1) and moloney and murine leukemia virus (MoMLV), filoviridae: ebola virus (EBOV) and marburg virus (MARV), togaviridae: sindbis virus (SINV) and Ross river virus (RRV). Specifically targets the multiply spliced but not unspliced or singly spliced HIV-1 mRNAs for degradation. The sequence is that of Zinc finger CCCH-type antiviral protein 1 (Zc3hav1) from Rattus norvegicus (Rat).